The chain runs to 125 residues: Succinate dehydrogenase assembly factor 3, mitochondrial (125 aa).

Residues 1-42 (MRTTNHLYRTVHRQGKPLLPPLHLYRRILRAHRTFPPAQRAL) constitute a mitochondrion transit peptide.

This sequence belongs to the complex I LYR family. SDHAF3 subfamily. Interacts with the iron-sulfur protein subunit within the SDH catalytic dimer.

Its subcellular location is the mitochondrion matrix. In terms of biological role, plays an essential role in the assembly of succinate dehydrogenase (SDH), an enzyme complex (also referred to as respiratory complex II) that is a component of both the tricarboxylic acid (TCA) cycle and the mitochondrial electron transport chain, and which couples the oxidation of succinate to fumarate with the reduction of ubiquinone (coenzyme Q) to ubiquinol. Promotes maturation of the iron-sulfur protein subunit of the SDH catalytic dimer, protecting it from the deleterious effects of oxidants. May act together with SDHAF1. This is Succinate dehydrogenase assembly factor 3, mitochondrial from Eremothecium gossypii (strain ATCC 10895 / CBS 109.51 / FGSC 9923 / NRRL Y-1056) (Yeast).